The primary structure comprises 131 residues: Bacteriohemerythrin (131 aa).

8 residues coordinate Fe cation: His20, Glu23, His56, Glu60, His75, His79, His117, and Asp122.

It belongs to the hemerythrin family. In terms of assembly, monomer.

Functionally, oxygen-binding protein. May be involved in a storage mechanism or for delivery to oxygen-requiring enzymes. The oxygen-binding site contains two iron atoms. In Aquifex aeolicus (strain VF5), this protein is Bacteriohemerythrin.